The sequence spans 84 residues: U8-theraphotoxin-Hhn1b (84 aa).

Positions 1-21 are cleaved as a signal peptide; the sequence is MKVVLIVCLVWVMAMMELVSC. Intrachain disulfides connect cysteine 23–cysteine 35, cysteine 29–cysteine 44, cysteine 34–cysteine 67, and cysteine 54–cysteine 75.

This sequence belongs to the AVIT (prokineticin) family. In terms of tissue distribution, expressed by the venom gland.

Its subcellular location is the secreted. The sequence is that of U8-theraphotoxin-Hhn1b from Cyriopagopus hainanus (Chinese bird spider).